A 32-amino-acid polypeptide reads, in one-letter code: Photosystem II reaction center protein T (32 aa).

The chain crosses the membrane as a helical span at residues 3–23 (ALVYTFLLIGTLMVIFFAVFF).

This sequence belongs to the PsbT family. As to quaternary structure, PSII is composed of 1 copy each of membrane proteins PsbA, PsbB, PsbC, PsbD, PsbE, PsbF, PsbH, PsbI, PsbJ, PsbK, PsbL, PsbM, PsbT, PsbX, PsbY, PsbZ, Psb30/Ycf12, at least 3 peripheral proteins of the oxygen-evolving complex and a large number of cofactors. It forms dimeric complexes.

Its subcellular location is the plastid. The protein localises to the chloroplast thylakoid membrane. Its function is as follows. Found at the monomer-monomer interface of the photosystem II (PS II) dimer, plays a role in assembly and dimerization of PSII. PSII is a light-driven water plastoquinone oxidoreductase, using light energy to abstract electrons from H(2)O, generating a proton gradient subsequently used for ATP formation. The polypeptide is Photosystem II reaction center protein T (Thalassiosira pseudonana (Marine diatom)).